A 481-amino-acid polypeptide reads, in one-letter code: Probable autolysin LytO (481 aa).

One can recognise a Peptidase C51 domain in the interval 7–148; sequence KNEFIEWLKT…AYDFPMWFIR (142 aa). Polar residues predominate over residues 155-165; sequence TAPRSVQSPTQ. The disordered stretch occupies residues 155 to 177; sequence TAPRSVQSPTQAPKKETAKPQPK. An N-acetylmuramoyl-L-alanine amidase domain is found at 198 to 323; sequence SNPKGIVIHN…NEFTSTSCPH (126 aa). Residues 398–466 enclose the SH3b domain; sequence EESARFTNGN…YLPIRTWNGS (69 aa).

Belongs to the N-acetylmuramoyl-L-alanine amidase 2 family.

It carries out the reaction Hydrolyzes the link between N-acetylmuramoyl residues and L-amino acid residues in certain cell-wall glycopeptides.. Its function is as follows. Has weak lytic activity toward S.aureus cells. The polypeptide is Probable autolysin LytO (Staphylococcus aureus (strain NCTC 8325 / PS 47)).